The chain runs to 439 residues: Proline--tRNA ligase (439 aa).

It belongs to the class-II aminoacyl-tRNA synthetase family. ProS type 2 subfamily. As to quaternary structure, homodimer.

Its subcellular location is the cytoplasm. The catalysed reaction is tRNA(Pro) + L-proline + ATP = L-prolyl-tRNA(Pro) + AMP + diphosphate. Functionally, catalyzes the attachment of proline to tRNA(Pro) in a two-step reaction: proline is first activated by ATP to form Pro-AMP and then transferred to the acceptor end of tRNA(Pro). The chain is Proline--tRNA ligase from Rhodopseudomonas palustris (strain BisB5).